Consider the following 304-residue polypeptide: uncharacterized protein (304 aa).

A signal peptide spans 1–25 (MVKTAMLGAVALVIALGGTCGVADA). The region spanning 34–303 (PMIVAHRAGT…DSPLAAQQWR (270 aa)) is the GP-PDE domain.

This is an uncharacterized protein from Mycobacterium tuberculosis (strain CDC 1551 / Oshkosh).